A 126-amino-acid chain; its full sequence is Protein ApaG (126 aa).

The ApaG domain occupies 2–126 (SALDTSIRVE…FRLATPGLLH (125 aa)).

The polypeptide is Protein ApaG (Shewanella baltica (strain OS223)).